We begin with the raw amino-acid sequence, 517 residues long: ATP synthase subunit beta (517 aa).

167–174 is a binding site for ATP; that stretch reads GGAGVGKT. Composition is skewed to basic and acidic residues over residues 475–484 and 495–508; these read AESMGAKMDD and DSKD…KADD. The tract at residues 475–517 is disordered; sequence AESMGAKMDDGGSDGAPPPSDSKDKGKGDSKADDKGDDADKDA.

This sequence belongs to the ATPase alpha/beta chains family. In terms of assembly, F-type ATPases have 2 components, CF(1) - the catalytic core - and CF(0) - the membrane proton channel. CF(1) has five subunits: alpha(3), beta(3), gamma(1), delta(1), epsilon(1). CF(0) has three main subunits: a(1), b(2) and c(9-12). The alpha and beta chains form an alternating ring which encloses part of the gamma chain. CF(1) is attached to CF(0) by a central stalk formed by the gamma and epsilon chains, while a peripheral stalk is formed by the delta and b chains.

It localises to the cell membrane. It catalyses the reaction ATP + H2O + 4 H(+)(in) = ADP + phosphate + 5 H(+)(out). Produces ATP from ADP in the presence of a proton gradient across the membrane. The catalytic sites are hosted primarily by the beta subunits. In Mycobacterium sp. (strain JLS), this protein is ATP synthase subunit beta.